The following is a 689-amino-acid chain: DNA ligase (689 aa).

Residues 40–44, 89–90, and Glu121 each bind NAD(+); these read DSEYD and SL. The active-site N6-AMP-lysine intermediate is Lys123. Residues Arg144, Glu179, Lys295, and Lys319 each coordinate NAD(+). The Zn(2+) site is built by Cys413, Cys416, Cys431, and Cys437. In terms of domain architecture, BRCT spans 610 to 689; sequence REQSSLTDKI…EEWLTLIKNV (80 aa).

It belongs to the NAD-dependent DNA ligase family. LigA subfamily. It depends on Mg(2+) as a cofactor. The cofactor is Mn(2+).

It catalyses the reaction NAD(+) + (deoxyribonucleotide)n-3'-hydroxyl + 5'-phospho-(deoxyribonucleotide)m = (deoxyribonucleotide)n+m + AMP + beta-nicotinamide D-nucleotide.. In terms of biological role, DNA ligase that catalyzes the formation of phosphodiester linkages between 5'-phosphoryl and 3'-hydroxyl groups in double-stranded DNA using NAD as a coenzyme and as the energy source for the reaction. It is essential for DNA replication and repair of damaged DNA. The sequence is that of DNA ligase from Rickettsia africae (strain ESF-5).